The primary structure comprises 431 residues: Gamma-glutamyl phosphate reductase (431 aa).

The protein belongs to the gamma-glutamyl phosphate reductase family.

The protein localises to the cytoplasm. It carries out the reaction L-glutamate 5-semialdehyde + phosphate + NADP(+) = L-glutamyl 5-phosphate + NADPH + H(+). It functions in the pathway amino-acid biosynthesis; L-proline biosynthesis; L-glutamate 5-semialdehyde from L-glutamate: step 2/2. In terms of biological role, catalyzes the NADPH-dependent reduction of L-glutamate 5-phosphate into L-glutamate 5-semialdehyde and phosphate. The product spontaneously undergoes cyclization to form 1-pyrroline-5-carboxylate. The polypeptide is Gamma-glutamyl phosphate reductase (Bifidobacterium longum subsp. infantis (strain ATCC 15697 / DSM 20088 / JCM 1222 / NCTC 11817 / S12)).